The primary structure comprises 337 residues: Glycerol-3-phosphate dehydrogenase [NAD(P)+] (337 aa).

The NADPH site is built by S11, W12, R32, and K109. Residues K109, G140, and S142 each contribute to the sn-glycerol 3-phosphate site. Residue A144 participates in NADPH binding. K195, D248, S258, R259, and N260 together coordinate sn-glycerol 3-phosphate. The Proton acceptor role is filled by K195. R259 provides a ligand contact to NADPH. Residues V283 and E285 each contribute to the NADPH site.

It belongs to the NAD-dependent glycerol-3-phosphate dehydrogenase family.

Its subcellular location is the cytoplasm. It catalyses the reaction sn-glycerol 3-phosphate + NAD(+) = dihydroxyacetone phosphate + NADH + H(+). It carries out the reaction sn-glycerol 3-phosphate + NADP(+) = dihydroxyacetone phosphate + NADPH + H(+). The protein operates within membrane lipid metabolism; glycerophospholipid metabolism. Catalyzes the reduction of the glycolytic intermediate dihydroxyacetone phosphate (DHAP) to sn-glycerol 3-phosphate (G3P), the key precursor for phospholipid synthesis. This Limosilactobacillus fermentum (strain NBRC 3956 / LMG 18251) (Lactobacillus fermentum) protein is Glycerol-3-phosphate dehydrogenase [NAD(P)+].